Here is an 876-residue protein sequence, read N- to C-terminus: Alanine--tRNA ligase (876 aa).

Position 74 is an N6-acetyllysine (K74). Zn(2+)-binding residues include H564, H568, C666, and H670.

The protein belongs to the class-II aminoacyl-tRNA synthetase family. In terms of assembly, homotetramer. It depends on Zn(2+) as a cofactor.

It localises to the cytoplasm. The enzyme catalyses tRNA(Ala) + L-alanine + ATP = L-alanyl-tRNA(Ala) + AMP + diphosphate. In terms of biological role, catalyzes the attachment of alanine to tRNA(Ala) in a two-step reaction: alanine is first activated by ATP to form Ala-AMP and then transferred to the acceptor end of tRNA(Ala). Also edits incorrectly charged Ser-tRNA(Ala) and Gly-tRNA(Ala) via its editing domain. The chain is Alanine--tRNA ligase from Shigella sonnei (strain Ss046).